The following is a 296-amino-acid chain: Cation-efflux pump FieF (296 aa).

Residues 1–18 lie on the Cytoplasmic side of the membrane; the sequence is MTQTSQYDFWVKLASRAS. The helical transmembrane segment at 19-32 threads the bilayer; the sequence is VATALTLITIKLLA. The Periplasmic segment spans residues 33–43; the sequence is WLYSGSASMLA. A helical transmembrane segment spans residues 44 to 60; that stretch reads SLTDSFADTLASIINFI. Positions 47, 51, 70, 73, and 77 each coordinate Zn(2+). The Cytoplasmic segment spans residues 61–83; that stretch reads AIRYAIVPADHDHRYGHGKAEPL. Residues 84-105 form a helical membrane-spanning segment; the sequence is AALAQSAFIMGSAFLLLFYGGE. At 106-119 the chain is on the periplasmic side; the sequence is RLLNPSPVENATLG. A helical transmembrane segment spans residues 120 to 138; that stretch reads VVVSVVAIVLTLALVLLQK. The Cytoplasmic segment spans residues 139 to 145; sequence RALAATN. The helical transmembrane segment at 146 to 160 threads the bilayer; that stretch reads STVVEADSLHYKSDL. Zn(2+) is bound by residues His155 and Asp159. Residues 161–180 are Periplasmic-facing; it reads FLNAAVLLALVLSQYGWWWA. The helical transmembrane segment at 181 to 200 threads the bilayer; the sequence is DGLFAVLIACYIGQQAFDLG. At 201-296 the chain is on the cytoplasmic side; that stretch reads YRSIQALLDR…DPVQVEPTTQ (96 aa). Residues His234, Asp235, His250, His263, His285, and Asp287 each contribute to the Zn(2+) site.

It belongs to the cation diffusion facilitator (CDF) transporter (TC 2.A.4) family. FieF subfamily. Homodimer. The subunits are held together in a parallel orientation through zinc binding at the interface of the cytoplasmic domains.

It is found in the cell inner membrane. It catalyses the reaction Zn(2+)(in) + H(+)(out) = Zn(2+)(out) + H(+)(in). It carries out the reaction Cd(2+)(in) + H(+)(out) = Cd(2+)(out) + H(+)(in). The catalysed reaction is Fe(2+)(in) + H(+)(out) = Fe(2+)(out) + H(+)(in). Cytoplasmic zinc binding may trigger movements of two electrically repulsive cytoplasmic domains and reorient transmembrane helices, thereby modulating coordination geometry of the active site for zinc transport. It may modulate activity in response to cytoplasmic metal fluctuations. In terms of biological role, divalent metal cation transporter which exports Zn(2+), Cd(2+) and possibly Fe(2+). Zn(2+)/H(+) antiporter capable of using the proton motive force to remove Zn(2+) from the cytoplasm. May be involved in zinc and iron detoxification by efflux. This Shewanella oneidensis (strain ATCC 700550 / JCM 31522 / CIP 106686 / LMG 19005 / NCIMB 14063 / MR-1) protein is Cation-efflux pump FieF.